Reading from the N-terminus, the 133-residue chain is Small ribosomal subunit protein uS9 (133 aa).

Over residues 98 to 113 the composition is skewed to basic and acidic residues; it reads RKPLKTEGHLSRDPRA. The disordered stretch occupies residues 98 to 133; the sequence is RKPLKTEGHLSRDPRAKERRKYGLKKARKAPQFSKR. Residues 114 to 133 are compositionally biased toward basic residues; it reads KERRKYGLKKARKAPQFSKR.

Belongs to the universal ribosomal protein uS9 family.

In Synechococcus sp. (strain CC9902), this protein is Small ribosomal subunit protein uS9.